Consider the following 35-residue polypeptide: Bacteriocin SRCAM 1580 (35 aa).

It belongs to the bacteriocin class IIA/YGNGV family.

It localises to the secreted. Bacteriocin with antibacterial activity against C.jejuni. The polypeptide is Bacteriocin SRCAM 1580 (Niallia circulans (Bacillus circulans)).